The following is a 612-amino-acid chain: Dihydroxy-acid dehydratase (612 aa).

Aspartate 81 serves as a coordination point for Mg(2+). Residue cysteine 122 participates in [2Fe-2S] cluster binding. Mg(2+)-binding residues include aspartate 123 and lysine 124. Lysine 124 is subject to N6-carboxylysine. [2Fe-2S] cluster is bound at residue cysteine 195. Residue glutamate 491 coordinates Mg(2+). The active-site Proton acceptor is the serine 517.

This sequence belongs to the IlvD/Edd family. As to quaternary structure, homodimer. [2Fe-2S] cluster is required as a cofactor. Requires Mg(2+) as cofactor.

It carries out the reaction (2R)-2,3-dihydroxy-3-methylbutanoate = 3-methyl-2-oxobutanoate + H2O. It catalyses the reaction (2R,3R)-2,3-dihydroxy-3-methylpentanoate = (S)-3-methyl-2-oxopentanoate + H2O. The protein operates within amino-acid biosynthesis; L-isoleucine biosynthesis; L-isoleucine from 2-oxobutanoate: step 3/4. It participates in amino-acid biosynthesis; L-valine biosynthesis; L-valine from pyruvate: step 3/4. Functionally, functions in the biosynthesis of branched-chain amino acids. Catalyzes the dehydration of (2R,3R)-2,3-dihydroxy-3-methylpentanoate (2,3-dihydroxy-3-methylvalerate) into 2-oxo-3-methylpentanoate (2-oxo-3-methylvalerate) and of (2R)-2,3-dihydroxy-3-methylbutanoate (2,3-dihydroxyisovalerate) into 2-oxo-3-methylbutanoate (2-oxoisovalerate), the penultimate precursor to L-isoleucine and L-valine, respectively. This Sinorhizobium medicae (strain WSM419) (Ensifer medicae) protein is Dihydroxy-acid dehydratase.